Consider the following 339-residue polypeptide: Ketol-acid reductoisomerase (NADP(+)) (339 aa).

A KARI N-terminal Rossmann domain is found at 1-182 (MRVYYDRDAD…GGGRSGIIET (182 aa)). NADP(+) contacts are provided by residues 24 to 27 (YGSQ), arginine 48, serine 51, threonine 53, and 83 to 86 (DELQ). Histidine 108 is an active-site residue. Residue glycine 134 participates in NADP(+) binding. The 146-residue stretch at 183 to 328 (SFREECETDL…EKLRAMMPWI (146 aa)) folds into the KARI C-terminal knotted domain. Residues aspartate 191, glutamate 195, glutamate 227, and glutamate 231 each contribute to the Mg(2+) site. Serine 252 provides a ligand contact to substrate.

The protein belongs to the ketol-acid reductoisomerase family. Requires Mg(2+) as cofactor.

The catalysed reaction is (2R)-2,3-dihydroxy-3-methylbutanoate + NADP(+) = (2S)-2-acetolactate + NADPH + H(+). It carries out the reaction (2R,3R)-2,3-dihydroxy-3-methylpentanoate + NADP(+) = (S)-2-ethyl-2-hydroxy-3-oxobutanoate + NADPH + H(+). It participates in amino-acid biosynthesis; L-isoleucine biosynthesis; L-isoleucine from 2-oxobutanoate: step 2/4. The protein operates within amino-acid biosynthesis; L-valine biosynthesis; L-valine from pyruvate: step 2/4. In terms of biological role, involved in the biosynthesis of branched-chain amino acids (BCAA). Catalyzes an alkyl-migration followed by a ketol-acid reduction of (S)-2-acetolactate (S2AL) to yield (R)-2,3-dihydroxy-isovalerate. In the isomerase reaction, S2AL is rearranged via a Mg-dependent methyl migration to produce 3-hydroxy-3-methyl-2-ketobutyrate (HMKB). In the reductase reaction, this 2-ketoacid undergoes a metal-dependent reduction by NADPH to yield (R)-2,3-dihydroxy-isovalerate. This Paramagnetospirillum magneticum (strain ATCC 700264 / AMB-1) (Magnetospirillum magneticum) protein is Ketol-acid reductoisomerase (NADP(+)).